The following is a 185-amino-acid chain: Dihydrofolate reductase 1 (185 aa).

Residues 8 to 185 (ELVLVVAADE…QASPRPLDDL (178 aa)) enclose the DHFR domain.

It belongs to the dihydrofolate reductase family.

It catalyses the reaction (6S)-5,6,7,8-tetrahydrofolate + NADP(+) = 7,8-dihydrofolate + NADPH + H(+). The protein operates within cofactor biosynthesis; tetrahydrofolate biosynthesis; 5,6,7,8-tetrahydrofolate from 7,8-dihydrofolate: step 1/1. Key enzyme in folate metabolism. Catalyzes an essential reaction for de novo glycine and purine synthesis, and for DNA precursor synthesis. The protein is Dihydrofolate reductase 1 (folA1) of Haloarcula marismortui (strain ATCC 43049 / DSM 3752 / JCM 8966 / VKM B-1809) (Halobacterium marismortui).